A 211-amino-acid chain; its full sequence is MNASANLCAASANDPQPGDQEAAHPVACAGDEPAAFLPHDLPIFLVGMMGAGKTTIGRGLARALRREFIDLDHELEARCGVRVPVIFEIEGEAGFRRREAAALQECTQRRQIILATGGGAVLAAENRQALRERGIVIYLRASVEELFRRTSRDRNRPLLATADPRATLRELMVAREPLYNEVADLVIDTGSMPIATLVKSLLPKLQAYEKK.

Residues 1-13 are compositionally biased toward low complexity; sequence MNASANLCAASAN. A disordered region spans residues 1–24; the sequence is MNASANLCAASANDPQPGDQEAAH. 50 to 55 is a binding site for ATP; the sequence is GAGKTT. A Mg(2+)-binding site is contributed by Thr-54. Asp-72, Arg-96, and Gly-118 together coordinate substrate. Residue Arg-156 participates in ATP binding. Residue Arg-175 coordinates substrate.

It belongs to the shikimate kinase family. Monomer. Requires Mg(2+) as cofactor.

Its subcellular location is the cytoplasm. The catalysed reaction is shikimate + ATP = 3-phosphoshikimate + ADP + H(+). The protein operates within metabolic intermediate biosynthesis; chorismate biosynthesis; chorismate from D-erythrose 4-phosphate and phosphoenolpyruvate: step 5/7. In terms of biological role, catalyzes the specific phosphorylation of the 3-hydroxyl group of shikimic acid using ATP as a cosubstrate. This Bordetella parapertussis (strain 12822 / ATCC BAA-587 / NCTC 13253) protein is Shikimate kinase.